We begin with the raw amino-acid sequence, 961 residues long: Vinculin (961 aa).

A run of 2 repeats spans residues 258-362 (ELDN…MGEL) and 371-470 (LGVD…ELKA). Residues 258 to 470 (ELDNLTVLKK…LTQKLYELKA (213 aa)) form a 2 X repeats region. The segment at 720–778 (AIAPPQPPPLPTSLPPPIPELSALHLSNQNAERAPPRPPLPREGLAPVRPPPPETDDED) is disordered. Pro residues predominate over residues 723-738 (PPQPPPLPTSLPPPIP). A Phosphothreonine modification is found at threonine 774.

Belongs to the vinculin/alpha-catenin family. Exhibits self-association properties.

It is found in the cytoplasm. The protein localises to the cytoskeleton. Its subcellular location is the cell junction. The protein resides in the adherens junction. It localises to the cell membrane. Involved in cell adhesion. May be involved in the attachment of the actin-based microfilaments to the plasma membrane. This Drosophila melanogaster (Fruit fly) protein is Vinculin (Vinc).